An 82-amino-acid polypeptide reads, in one-letter code: Defensin-like protein 275 (82 aa).

Positions 1-23 are cleaved as a signal peptide; sequence MALSKFQLVALLITYTLLFSCQS. Disulfide bonds link Cys36/Cys78, Cys42/Cys65, Cys48/Cys76, and Cys52/Cys77.

The protein belongs to the DEFL family.

The protein localises to the secreted. The sequence is that of Defensin-like protein 275 from Arabidopsis thaliana (Mouse-ear cress).